The sequence spans 491 residues: UDP-N-acetylmuramate--L-alanine ligase (491 aa).

126–132 (GTHGKTT) lines the ATP pocket.

This sequence belongs to the MurCDEF family.

It is found in the cytoplasm. It catalyses the reaction UDP-N-acetyl-alpha-D-muramate + L-alanine + ATP = UDP-N-acetyl-alpha-D-muramoyl-L-alanine + ADP + phosphate + H(+). Its pathway is cell wall biogenesis; peptidoglycan biosynthesis. In terms of biological role, cell wall formation. This Escherichia coli (strain SMS-3-5 / SECEC) protein is UDP-N-acetylmuramate--L-alanine ligase.